A 938-amino-acid polypeptide reads, in one-letter code: AP-4 complex subunit epsilon (938 aa).

10 HEAT repeats span residues 118 to 153, 154 to 190, 192 to 227, 234 to 272, 321 to 358, 359 to 395, 397 to 431, 454 to 495, 517 to 556, and 562 to 601; these read DLIILIVNTIQKDLRSDNYLVVCAALNAICRLINEE, TIPAVLPQVVELLNHQKEAVRKKAIMALHRFHRKSPS, VSHLVSNFRKRLCDNDPGVMGATLCPLFDLISEDVN, SSFVSILKQVTERRLPKSYDYHQMPAPFIQIKLLKIMAL, KLLEAAADAISKFLKSDSHNLKYMGIDGLGRLIKISPD, IAEQHQLAVIDCLEDPDDTLKRKTFELLYKMTKSSNV, VIVDRMIDYMISINDNHYKTEIASRCVELAEQFAP, KVAH…EPKL, YSASYISGKLCDVADAYSSDETVKGYAVSALMKIYAFEIA, and DVLPECQSLIEELLASHSTDLQQRAYELQALLALDARAVE. 4 disordered regions span residues 690–712, 725–867, 880–912, and 919–938; these read EPSYYSESHQPISTSLVSERESS, WGRP…VMGL, VDSLLSELSDSSKGNSRTYQPQTSKGPNTKEAL, and RQMGVNPTSQNPTLFKDLLG. The segment covering 694-706 has biased composition (polar residues); sequence YSESHQPISTSLV. The span at 728 to 744 shows a compositional bias: low complexity; the sequence is PSYQSTTAASSTTPQAA. The span at 764-779 shows a compositional bias: basic and acidic residues; sequence SSYEPKKPEIDPEKQR. Polar residues predominate over residues 808-821; it reads ANKTATVPKENQTP. Low complexity-rich tracts occupy residues 853–863 and 880–891; these read DSSSQDGGSSD and VDSLLSELSDSS. An HEAT 11 repeat occupies 874–911; sequence VTTTTSVDSLLSELSDSSKGNSRTYQPQTSKGPNTKEA. Polar residues predominate over residues 892–906; that stretch reads KGNSRTYQPQTSKGP.

This sequence belongs to the adaptor complexes large subunit family. In terms of assembly, adaptor protein complex 4 (AP-4) is a heterotetramer composed of two large adaptins (epsilon-type subunit and beta-type subunit), a medium adaptin (mu-type subunit) and a small adaptin (sigma-type subunit).

The protein localises to the golgi apparatus. It localises to the trans-Golgi network. Its subcellular location is the membrane. It is found in the coated pit. Functionally, subunit of novel type of clathrin- or non-clathrin-associated protein coat involved in targeting proteins from the trans-Golgi network (TGN) to the endosomal-lysosomal system. This is AP-4 complex subunit epsilon from Arabidopsis thaliana (Mouse-ear cress).